The following is a 370-amino-acid chain: Doublesex- and mab-3-related transcription factor C2 (370 aa).

Positions 1-38 (MDPSETAALHHCSADSSPADEARVPQSTELIPRRPVSR) are disordered. The segment at residues 42 to 89 (CARCRNHGVTAHLKGHKRLCLFQACECHKCVLILERRRVMAAQVALRR) is a DNA-binding region (DM). The segment at 334 to 356 (APPGGRGFQPVGPPLRPSPGSSV) is disordered.

This sequence belongs to the DMRT family. As to expression, expressed in testis. Highly expressed in ovary.

It localises to the nucleus. Its function is as follows. May be involved in sexual development. The protein is Doublesex- and mab-3-related transcription factor C2 (Dmrtc2) of Mus musculus (Mouse).